Consider the following 388-residue polypeptide: Succinate--CoA ligase [ADP-forming] subunit beta (388 aa).

The ATP-grasp domain maps to 9 to 244; the sequence is KEILRKFGVA…LDEEDPAEIE (236 aa). ATP-binding positions include lysine 46, 53–55, glutamate 99, alanine 102, and glutamate 107; that span reads GRG. The Mg(2+) site is built by asparagine 199 and aspartate 213. Residues asparagine 264 and 321–323 contribute to the substrate site; that span reads GIM.

It belongs to the succinate/malate CoA ligase beta subunit family. As to quaternary structure, heterotetramer of two alpha and two beta subunits. Mg(2+) is required as a cofactor.

The enzyme catalyses succinate + ATP + CoA = succinyl-CoA + ADP + phosphate. The catalysed reaction is GTP + succinate + CoA = succinyl-CoA + GDP + phosphate. Its pathway is carbohydrate metabolism; tricarboxylic acid cycle; succinate from succinyl-CoA (ligase route): step 1/1. Its function is as follows. Succinyl-CoA synthetase functions in the citric acid cycle (TCA), coupling the hydrolysis of succinyl-CoA to the synthesis of either ATP or GTP and thus represents the only step of substrate-level phosphorylation in the TCA. The beta subunit provides nucleotide specificity of the enzyme and binds the substrate succinate, while the binding sites for coenzyme A and phosphate are found in the alpha subunit. The sequence is that of Succinate--CoA ligase [ADP-forming] subunit beta from Burkholderia mallei (strain NCTC 10247).